Consider the following 352-residue polypeptide: N-acetyl-gamma-glutamyl-phosphate reductase (352 aa).

Residue C149 is part of the active site.

Belongs to the NAGSA dehydrogenase family. Type 1 subfamily.

It is found in the cytoplasm. It carries out the reaction N-acetyl-L-glutamate 5-semialdehyde + phosphate + NADP(+) = N-acetyl-L-glutamyl 5-phosphate + NADPH + H(+). It functions in the pathway amino-acid biosynthesis; L-arginine biosynthesis; N(2)-acetyl-L-ornithine from L-glutamate: step 3/4. Catalyzes the NADPH-dependent reduction of N-acetyl-5-glutamyl phosphate to yield N-acetyl-L-glutamate 5-semialdehyde. In Polynucleobacter asymbioticus (strain DSM 18221 / CIP 109841 / QLW-P1DMWA-1) (Polynucleobacter necessarius subsp. asymbioticus), this protein is N-acetyl-gamma-glutamyl-phosphate reductase.